Reading from the N-terminus, the 247-residue chain is 3-oxoacyl-[acyl-carrier-protein] reductase (247 aa).

11 to 35 (VTGASRGIGKATALALAATGMKVVV) serves as a coordination point for NADP(+). Residue Ser-143 participates in substrate binding. Catalysis depends on Tyr-156, which acts as the Proton acceptor.

This sequence belongs to the short-chain dehydrogenases/reductases (SDR) family.

It carries out the reaction a (3R)-hydroxyacyl-[ACP] + NADP(+) = a 3-oxoacyl-[ACP] + NADPH + H(+). The protein operates within lipid metabolism; fatty acid biosynthesis. In terms of biological role, catalyzes the NADPH-dependent reduction of beta-ketoacyl-ACP substrates to beta-hydroxyacyl-ACP products, the first reductive step in the elongation cycle of fatty acid biosynthesis. Is capable of reducing acetoacetyl-CoA, but less well than its paralog PhaB. This chain is 3-oxoacyl-[acyl-carrier-protein] reductase (fabG), found in Synechocystis sp. (strain ATCC 27184 / PCC 6803 / Kazusa).